We begin with the raw amino-acid sequence, 63 residues long: Large ribosomal subunit protein uL29 (63 aa).

The protein belongs to the universal ribosomal protein uL29 family.

The protein is Large ribosomal subunit protein uL29 of Bacillus cereus (strain ATCC 14579 / DSM 31 / CCUG 7414 / JCM 2152 / NBRC 15305 / NCIMB 9373 / NCTC 2599 / NRRL B-3711).